Here is a 1587-residue protein sequence, read N- to C-terminus: DNA topoisomerase 2 (1587 aa).

Residues Met-1 to Asn-15 are compositionally biased toward acidic residues. Residues Met-1–Ser-47 form a disordered region. Over residues Pro-22–Thr-31 the composition is skewed to basic residues. Residues Asn-126, Asn-155, Ser-183–Asn-185, and Gly-196–Lys-203 each bind ATP. Interaction with DNA regions lie at residues Lys-381–Lys-383 and Lys-381–Asn-386. Gln-415–Lys-417 is an ATP binding site. Positions Met-461–Gly-485 are disordered. Residues Cys-492–Ile-606 form the Toprim domain. The Mg(2+) site is built by Glu-498, Asp-575, and Asp-577. One can recognise a Topo IIA-type catalytic domain in the interval Ile-743–Leu-1190. The active-site O-(5'-phospho-DNA)-tyrosine intermediate is Tyr-833. The interval Lys-1016–Asn-1025 is interaction with DNA. The interval Glu-1204–Ser-1587 is disordered. Residues Leu-1271–Lys-1280 show a composition bias toward low complexity. Positions Pro-1308–Asp-1320 are enriched in basic and acidic residues. Residues Glu-1321–Glu-1334 show a composition bias toward acidic residues. Residues Val-1348–Lys-1364 show a composition bias toward basic and acidic residues. Over residues Arg-1365–Lys-1375 the composition is skewed to basic residues. Composition is skewed to acidic residues over residues Glu-1379–Met-1391 and Ser-1419–Leu-1430. 2 stretches are compositionally biased toward polar residues: residues Gly-1441–Ser-1451 and Gly-1466–Ser-1475. The segment covering Asp-1512–Glu-1521 has biased composition (acidic residues). Residues Lys-1524–Ala-1542 show a composition bias toward low complexity. Positions Pro-1558–Leu-1568 are enriched in pro residues. Residues Arg-1571–Ser-1587 are compositionally biased toward basic residues.

This sequence belongs to the type II topoisomerase family. In terms of assembly, homodimer. Mg(2+) is required as a cofactor. The cofactor is Mn(2+). Requires Ca(2+) as cofactor.

It localises to the nucleus. The enzyme catalyses ATP-dependent breakage, passage and rejoining of double-stranded DNA.. In terms of biological role, control of topological states of DNA by transient breakage and subsequent rejoining of DNA strands. Topoisomerase II makes double-strand breaks. The protein is DNA topoisomerase 2 (TOP2) of Penicillium chrysogenum (Penicillium notatum).